A 176-amino-acid polypeptide reads, in one-letter code: Large ribosomal subunit protein uL6 (176 aa).

The span at 156-170 shows a compositional bias: basic and acidic residues; it reads YKGKGVRYADEQVRR. Residues 156 to 176 are disordered; it reads YKGKGVRYADEQVRRKEAKKK.

It belongs to the universal ribosomal protein uL6 family. As to quaternary structure, part of the 50S ribosomal subunit.

This protein binds to the 23S rRNA, and is important in its secondary structure. It is located near the subunit interface in the base of the L7/L12 stalk, and near the tRNA binding site of the peptidyltransferase center. The polypeptide is Large ribosomal subunit protein uL6 (Shewanella woodyi (strain ATCC 51908 / MS32)).